A 405-amino-acid chain; its full sequence is Glucan 1,3-beta-glucosidase A (405 aa).

A signal peptide spans 1 to 14; that stretch reads MLPLLLCIVPYCWS. E199 functions as the Proton donor in the catalytic mechanism. Intrachain disulfides connect C280-C405 and C306-C332. E298 functions as the Nucleophile in the catalytic mechanism.

Belongs to the glycosyl hydrolase 5 (cellulase A) family. As to quaternary structure, monomer. Mn(2+) serves as cofactor.

The protein resides in the secreted. It catalyses the reaction Successive hydrolysis of beta-D-glucose units from the non-reducing ends of (1-&gt;3)-beta-D-glucans, releasing alpha-glucose.. In terms of biological role, beta-glucanases participate in the metabolism of beta-glucan, the main structural component of the cell wall. It could also function biosynthetically as a transglycosylase. The chain is Glucan 1,3-beta-glucosidase A (exgA) from Aspergillus oryzae (strain ATCC 42149 / RIB 40) (Yellow koji mold).